Here is a 362-residue protein sequence, read N- to C-terminus: Adenosine kinase (362 aa).

A2 carries the N-acetylalanine modification. The Nuclear localization signal motif lies at 8-16 (PKPKKLKVE). D35 provides a ligand contact to adenosine. A Mg(2+)-binding site is contributed by S49. A Phosphotyrosine modification is found at Y77. Residues D147 and N148 each contribute to the Mg(2+) site. Q306 is an adenosine binding site. D317 functions as the Proton acceptor in the catalytic mechanism.

This sequence belongs to the carbohydrate kinase PfkB family. As to quaternary structure, monomer. The cofactor is Mg(2+). In terms of tissue distribution, widely expressed. Highest level in placenta, liver, muscle and kidney.

It is found in the nucleus. It localises to the cytoplasm. The enzyme catalyses adenosine + ATP = AMP + ADP + H(+). It functions in the pathway purine metabolism; AMP biosynthesis via salvage pathway; AMP from adenosine: step 1/1. Its activity is regulated as follows. Activity is inhibited by 5-iodotubercidin and 5'-amino-5'-deoxyadenosine. Functionally, catalyzes the phosphorylation of the purine nucleoside adenosine at the 5' position in an ATP-dependent manner. Serves as a potential regulator of concentrations of extracellular adenosine and intracellular adenine nucleotides. The protein is Adenosine kinase of Homo sapiens (Human).